Here is a 776-residue protein sequence, read N- to C-terminus: Endonuclease MutS2 (776 aa).

328–335 (GPNTGGKT) contributes to the ATP binding site. The 76-residue stretch at 701 to 776 (LDLRGKRYEE…GSGATIVTFK (76 aa)) folds into the Smr domain.

The protein belongs to the DNA mismatch repair MutS family. MutS2 subfamily. As to quaternary structure, homodimer. Binds to stalled ribosomes, contacting rRNA.

Its function is as follows. Endonuclease that is involved in the suppression of homologous recombination and thus may have a key role in the control of bacterial genetic diversity. Functionally, acts as a ribosome collision sensor, splitting the ribosome into its 2 subunits. Detects stalled/collided 70S ribosomes which it binds and splits by an ATP-hydrolysis driven conformational change. Acts upstream of the ribosome quality control system (RQC), a ribosome-associated complex that mediates the extraction of incompletely synthesized nascent chains from stalled ribosomes and their subsequent degradation. Probably generates substrates for RQC. The polypeptide is Endonuclease MutS2 (Streptococcus mutans serotype c (strain ATCC 700610 / UA159)).